A 322-amino-acid chain; its full sequence is Corticotropin-releasing factor-binding protein (322 aa).

Positions 1-24 are cleaved as a signal peptide; sequence MSPNFKLQCHFILILLTALRGESR. Intrachain disulfides connect Cys60–Cys81, Cys104–Cys141, Cys183–Cys205, Cys237–Cys264, and Cys277–Cys318. The N-linked (GlcNAc...) asparagine glycan is linked to Asn204.

It belongs to the CRF-binding protein family.

It is found in the secreted. In terms of biological role, binds CRF and inactivates it. May prevent inappropriate pituitary-adrenal stimulation in pregnancy. The sequence is that of Corticotropin-releasing factor-binding protein (Crhbp) from Mus musculus (Mouse).